The chain runs to 292 residues: RNA polymerase II transcriptional coactivator SUB1 (292 aa).

Disordered stretches follow at residues 1–31 (MSYYNRYRNKRRSDNGGGNLSNSNNNNGGMP) and 117–292 (LLSD…SEEE). Residues 20-31 (LSNSNNNNGGMP) are compositionally biased toward low complexity. Ser-119 carries the phosphoserine modification. 4 stretches are compositionally biased toward basic and acidic residues: residues 133-166 (NNDKDKNGKDKNSPKKRREDKSKASNESHDLEPR), 179-191 (PHEENIQNAEREA), 204-240 (KQQEERKQKEKEEAEEAKAKAVAEQEKEAKAKEKIAE), and 251-267 (AKKEDIVSNINESKDAN). Ser-268, Ser-269, and Ser-289 each carry phosphoserine.

Belongs to the transcriptional coactivator PC4 family.

Its subcellular location is the nucleus. Its function is as follows. Plays a role in the release of TFIIB from the transcription complex during transcription initiation. Binds to TFIIB and specifically inhibits the formation of the TBP-TFIIB-promoter complexes. The protein is RNA polymerase II transcriptional coactivator SUB1 (SUB1) of Saccharomyces cerevisiae (strain ATCC 204508 / S288c) (Baker's yeast).